The sequence spans 1422 residues: DNA-directed RNA polymerase subunit beta (1422 aa).

Residues 1392–1422 (QAAREAAERDLGGGPLGAPRGAVASGEKSSA) are disordered.

Belongs to the RNA polymerase beta chain family. As to quaternary structure, the RNAP catalytic core consists of 2 alpha, 1 beta, 1 beta' and 1 omega subunit. When a sigma factor is associated with the core the holoenzyme is formed, which can initiate transcription.

The enzyme catalyses RNA(n) + a ribonucleoside 5'-triphosphate = RNA(n+1) + diphosphate. DNA-dependent RNA polymerase catalyzes the transcription of DNA into RNA using the four ribonucleoside triphosphates as substrates. In Anaeromyxobacter dehalogenans (strain 2CP-1 / ATCC BAA-258), this protein is DNA-directed RNA polymerase subunit beta.